The sequence spans 234 residues: Pepsin inhibitor Dit33 (234 aa).

An N-terminal signal peptide occupies residues 1-17 (MKILFCFVLLAIAALRA). An intrachain disulfide couples C135 to C230. The segment at 200–222 (RHETSSQPSDATTISTTTQAPVE) is disordered. Residues 204-219 (SSQPSDATTISTTTQA) show a composition bias toward polar residues.

The protein belongs to the protease inhibitor I33 family.

Its subcellular location is the secreted. Aspartyl protease inhibitor. The chain is Pepsin inhibitor Dit33 (DIT33) from Dirofilaria immitis (Canine heartworm).